Reading from the N-terminus, the 440-residue chain is Exodeoxyribonuclease 7 large subunit (440 aa).

Belongs to the XseA family. In terms of assembly, heterooligomer composed of large and small subunits.

The protein resides in the cytoplasm. The enzyme catalyses Exonucleolytic cleavage in either 5'- to 3'- or 3'- to 5'-direction to yield nucleoside 5'-phosphates.. In terms of biological role, bidirectionally degrades single-stranded DNA into large acid-insoluble oligonucleotides, which are then degraded further into small acid-soluble oligonucleotides. The chain is Exodeoxyribonuclease 7 large subunit from Ralstonia nicotianae (strain ATCC BAA-1114 / GMI1000) (Ralstonia solanacearum).